A 246-amino-acid polypeptide reads, in one-letter code: mRNA-decapping protein g5R (246 aa).

Residues 93–239 (QKFRKNWLLP…IIGPAFNFIK (147 aa)) enclose the Nudix hydrolase domain. Residues 128-149 (GKPKEDESDLTCAIREFEEETG) carry the Nudix box motif. A Mg(2+)-binding site is contributed by Glu-134. Glu-143 acts as the Nucleophile in catalysis. Mg(2+) contacts are provided by Glu-147 and Asp-169.

The protein belongs to the Nudix hydrolase family. DIPP subfamily. Interacts with host RPL23A. It depends on Mg(2+) as a cofactor. Requires Mn(2+) as cofactor.

It is found in the host rough endoplasmic reticulum. It carries out the reaction diphospho-myo-inositol polyphosphate + H2O = myo-inositol polyphosphate + phosphate.. Its function is as follows. Decapping enzyme required for the removal of the 5'-end m7GpppN cap tethered to viral and host mRNAs to allow their decay in cells. May therefore accelerate viral and cellular mRNA turnover to eliminate competing host mRNAs and allow stage-specific synthesis of viral proteins. Acceleration of the turnover of cellular transcripts may even promote the shutoff of host protein synthesis. In addition to the mRNA cap, g5R also efficiently hydrolyzes diphosphoinositol polyphosphates. Down-regulation of the level of PP-InsP5 (diphosphoinositol pentakisphosphate) may play a role in viral manipulation of the cellular secretory pathway, a step necessary for the formation of virions. Binds viral and cellular poly(A) mRNAs, thereby decreasing both types of mRNAs. The chain is mRNA-decapping protein g5R from African swine fever virus (isolate Warthog/Namibia/Wart80/1980) (ASFV).